A 102-amino-acid chain; its full sequence is Small ribosomal subunit protein uS10 (102 aa).

The protein belongs to the universal ribosomal protein uS10 family. As to quaternary structure, part of the 30S ribosomal subunit.

In terms of biological role, involved in the binding of tRNA to the ribosomes. The sequence is that of Small ribosomal subunit protein uS10 from Methylobacterium nodulans (strain LMG 21967 / CNCM I-2342 / ORS 2060).